We begin with the raw amino-acid sequence, 421 residues long: Enolase (421 aa).

Gln-165 is a (2R)-2-phosphoglycerate binding site. The Proton donor role is filled by Glu-207. Positions 244, 285, and 312 each coordinate Mg(2+). 4 residues coordinate (2R)-2-phosphoglycerate: Lys-337, Arg-366, Ser-367, and Lys-388. Residue Lys-337 is the Proton acceptor of the active site.

Belongs to the enolase family. It depends on Mg(2+) as a cofactor.

The protein localises to the cytoplasm. Its subcellular location is the secreted. It is found in the cell surface. The catalysed reaction is (2R)-2-phosphoglycerate = phosphoenolpyruvate + H2O. It functions in the pathway carbohydrate degradation; glycolysis; pyruvate from D-glyceraldehyde 3-phosphate: step 4/5. In terms of biological role, catalyzes the reversible conversion of 2-phosphoglycerate (2-PG) into phosphoenolpyruvate (PEP). It is essential for the degradation of carbohydrates via glycolysis. In Ehrlichia chaffeensis (strain ATCC CRL-10679 / Arkansas), this protein is Enolase.